A 155-amino-acid polypeptide reads, in one-letter code: Pathogenesis-related protein STH-2 (155 aa).

It belongs to the BetVI family.

The sequence is that of Pathogenesis-related protein STH-2 (STH-2) from Solanum tuberosum (Potato).